The sequence spans 307 residues: Ubiquitin recognition factor in ER-associated degradation protein 1 (307 aa).

At Met-1 the chain carries N-acetylmethionine. A phosphoserine mark is found at Ser-129, Ser-231, Ser-245, Ser-247, and Ser-299. 2 disordered regions span residues 231 to 256 and 288 to 307; these read SGNR…DIKR and GRFV…GRKP.

Belongs to the UFD1 family. In terms of assembly, heterodimer with NPLOC4, this heterodimer binds VCP and inhibits Golgi membrane fusion. Interacts with USP13. Interacts with ZFAND2B; probably through VCP. As to expression, found in adult heart, skeletal muscle and pancreas, and in fetal liver and kidney.

The protein resides in the nucleus. It localises to the cytoplasm. The protein localises to the cytosol. The protein operates within protein degradation; proteasomal ubiquitin-dependent pathway. In terms of biological role, essential component of the ubiquitin-dependent proteolytic pathway which degrades ubiquitin fusion proteins. The ternary complex containing UFD1, VCP and NPLOC4 binds ubiquitinated proteins and is necessary for the export of misfolded proteins from the ER to the cytoplasm, where they are degraded by the proteasome. The NPLOC4-UFD1-VCP complex regulates spindle disassembly at the end of mitosis and is necessary for the formation of a closed nuclear envelope. It may be involved in the development of some ectoderm-derived structures. Acts as a negative regulator of type I interferon production via the complex formed with VCP and NPLOC4, which binds to RIGI and recruits RNF125 to promote ubiquitination and degradation of RIGI. This is Ubiquitin recognition factor in ER-associated degradation protein 1 from Homo sapiens (Human).